The primary structure comprises 667 residues: Probable endo-1,3(4)-beta-glucanase AFLA_105200 (667 aa).

An N-terminal signal peptide occupies residues 1–24 (MSSSSFVWTVGSIALSSLITPTIA). The region spanning 25–288 (DGSGSRYQLT…WAGGVFGDSG (264 aa)) is the GH16 domain. N-linked (GlcNAc...) asparagine glycosylation is present at Asn63. Residue Glu144 is the Nucleophile of the active site. The Proton donor role is filled by Glu149. 2 stretches are compositionally biased toward polar residues: residues 354-363 (VPSVTSTPIL) and 379-394 (ATSS…QTSV). Disordered stretches follow at residues 354 to 427 (VPSV…ADAV) and 448 to 646 (GTIQ…AGAS). 3 stretches are compositionally biased toward low complexity: residues 395–427 (AGAE…ADAV), 448–483 (GTIQ…SQEP), and 574–622 (APTS…EATA). Residues 623–637 (PTETDSGASTGTNPE) show a composition bias toward polar residues. Gly644 carries the GPI-anchor amidated glycine lipid modification. The propeptide at 645 to 667 (ASKSVGISGLAGIVCGIAMAMLA) is removed in mature form.

It belongs to the glycosyl hydrolase 16 family.

Its subcellular location is the cell membrane. The enzyme catalyses Endohydrolysis of (1-&gt;3)- or (1-&gt;4)-linkages in beta-D-glucans when the glucose residue whose reducing group is involved in the linkage to be hydrolyzed is itself substituted at C-3.. Functionally, mixed-linked glucanase involved in the degradation of complex natural cellulosic substrates. The sequence is that of Probable endo-1,3(4)-beta-glucanase AFLA_105200 from Aspergillus flavus (strain ATCC 200026 / FGSC A1120 / IAM 13836 / NRRL 3357 / JCM 12722 / SRRC 167).